We begin with the raw amino-acid sequence, 87 residues long: Small ribosomal subunit protein bS20 (87 aa).

A disordered region spans residues 1-27 (MANIKSAKKRAVTSEKRRKHNASRRSM).

The protein belongs to the bacterial ribosomal protein bS20 family.

In terms of biological role, binds directly to 16S ribosomal RNA. In Erwinia tasmaniensis (strain DSM 17950 / CFBP 7177 / CIP 109463 / NCPPB 4357 / Et1/99), this protein is Small ribosomal subunit protein bS20.